The following is a 1497-amino-acid chain: Collagen alpha-1(XVII) chain (1497 aa).

Disordered stretches follow at residues 1–154 and 167–186; these read MDVT…PSTR and GSRS…LPIP. Residues 1 to 467 are Cytoplasmic-facing; it reads MDVTKKNKRD…CGSCCSWWKW (467 aa). Positions 1–566 are nonhelical region (NC16); sequence MDVTKKNKRD…MMEQENGNLR (566 aa). Over residues 9-19 the composition is skewed to basic and acidic residues; sequence RDGTEVTERIV. 2 stretches are compositionally biased toward polar residues: residues 57 to 96 and 169 to 183; these read LTHG…SPGS and RSAS…SNTL. The tract at residues 145–230 is necessary for interaction with DST and for the recruitment of DST to hemidesmosome; the sequence is RLQSASPSTR…WSSTLPAGSS (86 aa). Residues 468–488 traverse the membrane as a helical; Signal-anchor for type II membrane protein segment; it reads LLGLLLTWLLLLGLLFGLIAL. At 489-1497 the chain is on the extracellular side; the sequence is AEEVRKLKAR…RRRRSIAVKP (1009 aa). At Ser544 the chain carries Phosphoserine; by CK2. Disordered regions lie at residues 562-1011, 1209-1234, and 1261-1316; these read NGNL…SSSG, GLSF…VSGA, and SFIV…TGGG. Positions 567 to 1482 are triple-helical region; the sequence is GSPGPKGDMG…KGEKGDKGDQ (916 aa). The span at 590–602 shows a compositional bias: pro residues; it reads PGIPGPLGHPGPQ. Low complexity-rich tracts occupy residues 604-635, 661-673, 735-748, and 774-796; these read PKGQ…RGEA, PGSV…SGSP, EPGA…AGPD, and DPGK…PGRP. 3 stretches are compositionally biased toward pro residues: residues 820–841, 858–881, and 907–916; these read PGPP…PGPA, PPGP…PRGP, and PPGPPGPPGP. Composition is skewed to low complexity over residues 936-946 and 968-987; these read GFSTSGSSSFG and PGVP…GSSS. 3 stretches are compositionally biased toward pro residues: residues 994–1004, 1214–1228, and 1266–1275; these read PPGPPGPPGPP, PGPP…PRGP, and PPGPPGPQGP. Over residues 1289-1312 the composition is skewed to low complexity; the sequence is SRGSSSSSHSSSVRRGSSYSSSMS. Asn1421 carries an N-linked (GlcNAc...) asparagine glycan. Residues 1434-1497 form a disordered region; that stretch reads GAIQGPPGQK…RRRRSIAVKP (64 aa). Residues 1458–1469 show a composition bias toward pro residues; the sequence is AGPPGHPGPPGP. Residues 1472 to 1481 show a composition bias toward basic and acidic residues; sequence HKGEKGDKGD. The segment at 1483–1497 is nonhelical region (NC1); sequence VYAGRRRRRSIAVKP. Residues 1486–1497 show a composition bias toward basic residues; sequence GRRRRRSIAVKP.

Homotrimers of alpha 1(XVII)chains. Interacts (via cytoplasmic region) with ITGB4 (via cytoplasmic region). Interacts (via cytoplasmic region) with DST isoform 3 (via N-terminus). Interacts (via N-terminus) with PLEC. Interacts (via cytoplasmic region) with DSP. The intracellular/endo domain is disulfide-linked. Post-translationally, prolines at the third position of the tripeptide repeating unit (G-X-Y) are hydroxylated in some or all of the chains. In terms of processing, the ectodomain is shedded from the surface of keratinocytes resulting in a 120-kDa soluble form, also named as 120 kDa linear IgA disease antigen. The shedding is mediated by membrane-bound metalloproteases. This cleavage is inhibited by phosphorylation at Ser-544. In terms of tissue distribution, detected in skin. In the cornea, it is detected in the epithelial basement membrane, the epithelial cells, and at a lower level in stromal cells (at protein level). Stratified squamous epithelia. Found in hemidesmosomes. Expressed in cornea, oral mucosa, esophagus, intestine, kidney collecting ducts, ureter, bladder, urethra and thymus but is absent in lung, blood vessels, skeletal muscle and nerves.

The protein localises to the cell junction. It is found in the hemidesmosome. The protein resides in the membrane. Its subcellular location is the secreted. It localises to the extracellular space. The protein localises to the extracellular matrix. It is found in the basement membrane. Its function is as follows. May play a role in the integrity of hemidesmosome and the attachment of basal keratinocytes to the underlying basement membrane. Functionally, the 120 kDa linear IgA disease antigen is an anchoring filament component involved in dermal-epidermal cohesion. Is the target of linear IgA bullous dermatosis autoantibodies. In Homo sapiens (Human), this protein is Collagen alpha-1(XVII) chain (COL17A1).